We begin with the raw amino-acid sequence, 584 residues long: Aspartate--tRNA(Asp/Asn) ligase (584 aa).

Glu177 provides a ligand contact to L-aspartate. The aspartate stretch occupies residues 201 to 204 (QLFK). Arg223 is an L-aspartate binding site. ATP is bound by residues 223–225 (RDE) and Gln232. Residue His447 coordinates L-aspartate. Glu481 is an ATP binding site. Position 488 (Arg488) interacts with L-aspartate. Residue 533–536 (GLDR) coordinates ATP.

Belongs to the class-II aminoacyl-tRNA synthetase family. Type 1 subfamily. Homodimer.

It is found in the cytoplasm. The enzyme catalyses tRNA(Asx) + L-aspartate + ATP = L-aspartyl-tRNA(Asx) + AMP + diphosphate. Aspartyl-tRNA synthetase with relaxed tRNA specificity since it is able to aspartylate not only its cognate tRNA(Asp) but also tRNA(Asn). Reaction proceeds in two steps: L-aspartate is first activated by ATP to form Asp-AMP and then transferred to the acceptor end of tRNA(Asp/Asn). This chain is Aspartate--tRNA(Asp/Asn) ligase, found in Chlamydia pneumoniae (Chlamydophila pneumoniae).